The sequence spans 405 residues: Phosphoglycerate kinase (405 aa).

Substrate contacts are provided by residues 24–26 (DFN), arginine 40, 63–66 (HLGR), arginine 122, and arginine 162. Residues lysine 212, glutamate 331, and 361–364 (GGDS) each bind ATP.

This sequence belongs to the phosphoglycerate kinase family. As to quaternary structure, monomer.

The protein localises to the cytoplasm. The enzyme catalyses (2R)-3-phosphoglycerate + ATP = (2R)-3-phospho-glyceroyl phosphate + ADP. Its pathway is carbohydrate degradation; glycolysis; pyruvate from D-glyceraldehyde 3-phosphate: step 2/5. In Corynebacterium efficiens (strain DSM 44549 / YS-314 / AJ 12310 / JCM 11189 / NBRC 100395), this protein is Phosphoglycerate kinase.